Reading from the N-terminus, the 511-residue chain is V-type proton ATPase subunit B, brain isoform (511 aa).

Arginine 400 is an ATP binding site.

The protein belongs to the ATPase alpha/beta chains family. As to quaternary structure, V-ATPase is a heteromultimeric enzyme made up of two complexes: the ATP-hydrolytic V1 complex and the proton translocation V0 complex. The V1 complex consists of three catalytic AB heterodimers that form a heterohexamer, three peripheral stalks each consisting of EG heterodimers, one central rotor including subunits D and F, and the regulatory subunits C and H. The proton translocation complex V0 consists of the proton transport subunit a, a ring of proteolipid subunits c9c'', rotary subunit d, subunits e and f, and the accessory subunits ATP6AP1/Ac45 and ATP6AP2/PRR.

It localises to the apical cell membrane. The protein localises to the melanosome. It is found in the cytoplasm. The protein resides in the cytoplasmic vesicle. Its subcellular location is the secretory vesicle. It localises to the synaptic vesicle membrane. The protein localises to the clathrin-coated vesicle membrane. In terms of biological role, non-catalytic subunit of the V1 complex of vacuolar(H+)-ATPase (V-ATPase), a multisubunit enzyme composed of a peripheral complex (V1) that hydrolyzes ATP and a membrane integral complex (V0) that translocates protons. V-ATPase is responsible for acidifying and maintaining the pH of intracellular compartments and in some cell types, is targeted to the plasma membrane, where it is responsible for acidifying the extracellular environment. In renal intercalated cells, can partially compensate the lack of ATP6V1B1 and mediate secretion of protons (H+) into the urine under base-line conditions but not in conditions of acid load. This chain is V-type proton ATPase subunit B, brain isoform (ATP6V1B2), found in Pongo abelii (Sumatran orangutan).